Here is a 123-residue protein sequence, read N- to C-terminus: UPF0102 protein PSPPH_4120 (123 aa).

It belongs to the UPF0102 family.

In Pseudomonas savastanoi pv. phaseolicola (strain 1448A / Race 6) (Pseudomonas syringae pv. phaseolicola (strain 1448A / Race 6)), this protein is UPF0102 protein PSPPH_4120.